We begin with the raw amino-acid sequence, 82 residues long: Small ribosomal subunit protein eS17 (82 aa).

The protein belongs to the eukaryotic ribosomal protein eS17 family.

This chain is Small ribosomal subunit protein eS17, found in Sulfolobus acidocaldarius (strain ATCC 33909 / DSM 639 / JCM 8929 / NBRC 15157 / NCIMB 11770).